Reading from the N-terminus, the 649-residue chain is Lysophospholipase (649 aa).

The N-terminal stretch at 1 to 21 is a signal peptide; the sequence is MNLKEWLLFSDAVFFAQGTLA. N-linked (GlcNAc...) asparagine glycans are attached at residues asparagine 32, asparagine 51, asparagine 77, asparagine 90, asparagine 121, asparagine 158, asparagine 168, asparagine 213, asparagine 275, asparagine 343, asparagine 386, asparagine 457, asparagine 487, asparagine 511, asparagine 539, asparagine 563, and asparagine 580. Positions 34 to 584 constitute a PLA2c domain; the sequence is SCDEDINLIR…TNYCWNGTID (551 aa).

Belongs to the lysophospholipase family.

It localises to the secreted. It carries out the reaction a 1-acyl-sn-glycero-3-phosphocholine + H2O = sn-glycerol 3-phosphocholine + a fatty acid + H(+). In terms of biological role, catalyzes the release of fatty acids from lysophospholipids. The polypeptide is Lysophospholipase (Torulaspora delbrueckii (Yeast)).